We begin with the raw amino-acid sequence, 204 residues long: NADH-ubiquinone oxidoreductase chain 6 (204 aa).

5 helical membrane-spanning segments follow: residues 5–25, 29–49, 56–76, 91–111, and 151–171; these read IFLF…VIGL, VHSV…LLLL, FMLI…VVMM, LWPI…SSFY, and LLFL…IVLT.

It belongs to the complex I subunit 6 family.

Its subcellular location is the mitochondrion membrane. It carries out the reaction a ubiquinone + NADH + 5 H(+)(in) = a ubiquinol + NAD(+) + 4 H(+)(out). Functionally, core subunit of the mitochondrial membrane respiratory chain NADH dehydrogenase (Complex I) that is believed to belong to the minimal assembly required for catalysis. Complex I functions in the transfer of electrons from NADH to the respiratory chain. The immediate electron acceptor for the enzyme is believed to be ubiquinone. This chain is NADH-ubiquinone oxidoreductase chain 6 (ND6), found in Chondrus crispus (Carrageen Irish moss).